The primary structure comprises 352 residues: 4-hydroxy-2-oxovalerate aldolase 4 (352 aa).

Residues 9–261 (IRVTDSSLRD…RTGIDTLKII (253 aa)) enclose the Pyruvate carboxyltransferase domain. Position 17–18 (17–18 (RD)) interacts with substrate. Aspartate 18 contacts Mn(2+). Histidine 21 functions as the Proton acceptor in the catalytic mechanism. Substrate-binding residues include serine 171 and histidine 200. The Mn(2+) site is built by histidine 200 and histidine 202. Tyrosine 291 is a binding site for substrate.

The protein belongs to the 4-hydroxy-2-oxovalerate aldolase family.

The catalysed reaction is (S)-4-hydroxy-2-oxopentanoate = acetaldehyde + pyruvate. In Rhodococcus jostii (strain RHA1), this protein is 4-hydroxy-2-oxovalerate aldolase 4.